Consider the following 367-residue polypeptide: Cell division protein FtsZ (367 aa).

GTP contacts are provided by residues 17–21 (GGGSN), 104–106 (GTG), Glu-135, Lys-139, and Asp-183.

The protein belongs to the FtsZ family. Homodimer. Polymerizes to form a dynamic ring structure in a strictly GTP-dependent manner. Interacts directly with several other division proteins.

It is found in the cytoplasm. Essential cell division protein that forms a contractile ring structure (Z ring) at the future cell division site. The regulation of the ring assembly controls the timing and the location of cell division. One of the functions of the FtsZ ring is to recruit other cell division proteins to the septum to produce a new cell wall between the dividing cells. Binds GTP and shows GTPase activity. This Aquifex aeolicus (strain VF5) protein is Cell division protein FtsZ.